The primary structure comprises 211 residues: SVVGIDLGFLNCYIAVARSGGIETIANEYSDRCTPACISLGSRSQIVTNVRNTIHGFKKIRLPYELQKMPNGSTGVKVRLKVLATTFDPYLGGRVEPPLKSVMDQANLQREDINSIEIVGGATRIPAVKEQVTRFFLKDISTTLNADEAVARNHPAPFSKSIDLPIQSSLYRNAVEEYVYDFRDKFITPEDMNKYGQPIQMKYVEHEERPK.

Ser161 carries the post-translational modification Phosphoserine.

The protein belongs to the heat shock protein 70 family. As to quaternary structure, homodimer.

Its subcellular location is the cytoplasm. The protein resides in the nucleus. Possesses chaperone activity in vitro where it inhibits aggregation of citrate synthase. The polypeptide is Heat shock 70 kDa protein 4L (Mesocricetus auratus (Golden hamster)).